A 171-amino-acid chain; its full sequence is Protein TIFY 11d (171 aa).

One can recognise a Tify domain in the interval 65-100 (PSAGTAPLTIFYDGRMVVVDDVPVEKAAELMRLAGS). The Jas motif lies at 117–142 (PIARKASLQRFLQKRKHRITTTSEPY). Residues 119–126 (ARKASLQR) carry the Nuclear localization signal motif.

The protein belongs to the TIFY/JAZ family. In terms of assembly, interacts with BHLH148 and COI1A. Interacts with COI1A, COI1B and COI2 in a coronatine-dependent manner. Coronatine is an analog of jasmonoyl isoleucine (JA-Ile). Post-translationally, ubiquitinated. Increase in jasmonoyl isoleucine (JA-Ile) levels mediates its degradation via COI1A-mediated proteasome pathway.

The protein localises to the nucleus. Functionally, repressor of jasmonate (JA) responses. May act on an initial response of JA-regulated gene expression toward drought tolerance as part of a BHLH148-TIFY11D/JAZ12-COI1A complex. This chain is Protein TIFY 11d, found in Oryza sativa subsp. japonica (Rice).